The primary structure comprises 473 residues: Photosystem II CP43 reaction center protein (473 aa).

A propeptide spanning residues 1–14 (MKTLYSLRRFYPVE) is cleaved from the precursor. Threonine 15 carries the post-translational modification N-acetylthreonine. The residue at position 15 (threonine 15) is a Phosphothreonine. Transmembrane regions (helical) follow at residues 69-93 (LFEV…PHLA), 134-155 (LLGP…KDRN), 178-200 (KALY…RKIT), 255-275 (KPFA…LSYS), and 291-312 (WFNN…ASQA). Glutamate 367 is a binding site for [CaMn4O5] cluster. The chain crosses the membrane as a helical span at residues 447-471 (RARAAAAGFEKGIDRDLEPVLSMTP).

Belongs to the PsbB/PsbC family. PsbC subfamily. As to quaternary structure, PSII is composed of 1 copy each of membrane proteins PsbA, PsbB, PsbC, PsbD, PsbE, PsbF, PsbH, PsbI, PsbJ, PsbK, PsbL, PsbM, PsbT, PsbX, PsbY, PsbZ, Psb30/Ycf12, at least 3 peripheral proteins of the oxygen-evolving complex and a large number of cofactors. It forms dimeric complexes. Binds multiple chlorophylls and provides some of the ligands for the Ca-4Mn-5O cluster of the oxygen-evolving complex. It may also provide a ligand for a Cl- that is required for oxygen evolution. PSII binds additional chlorophylls, carotenoids and specific lipids. serves as cofactor.

The protein resides in the plastid. It is found in the chloroplast thylakoid membrane. One of the components of the core complex of photosystem II (PSII). It binds chlorophyll and helps catalyze the primary light-induced photochemical processes of PSII. PSII is a light-driven water:plastoquinone oxidoreductase, using light energy to abstract electrons from H(2)O, generating O(2) and a proton gradient subsequently used for ATP formation. The protein is Photosystem II CP43 reaction center protein of Phalaenopsis aphrodite subsp. formosana (Moth orchid).